A 352-amino-acid polypeptide reads, in one-letter code: ATP synthase subunit a 2 (352 aa).

Positions 1–26 (MRKKAISRILALVVPVLLSLNSQAFA) are cleaved as a signal peptide. Transmembrane regions (helical) follow at residues 112-132 (VVMI…AGAS), 172-192 (FLPY…LGLI), 195-215 (GATA…TFVI), 232-252 (HLTA…EILG), 264-284 (LFAN…ISFI), 289-309 (IVAV…ELFV), and 310-330 (AFLQ…LATA).

This sequence belongs to the ATPase A chain family. In terms of assembly, F-type ATPases have 2 components, CF(1) - the catalytic core - and CF(0) - the membrane proton channel. CF(1) has five subunits: alpha(3), beta(3), gamma(1), delta(1), epsilon(1). CF(0) has four main subunits: a, b, b' and c.

It is found in the cell inner membrane. Functionally, key component of the proton channel; it plays a direct role in the translocation of protons across the membrane. In Chlorobaculum tepidum (strain ATCC 49652 / DSM 12025 / NBRC 103806 / TLS) (Chlorobium tepidum), this protein is ATP synthase subunit a 2.